The chain runs to 512 residues: Protein maph-9 (512 aa).

3 disordered regions span residues 24–103 (ISRK…DDDF), 168–386 (DLSE…KNEK), and 481–512 (GNRL…RPFR). Composition is skewed to low complexity over residues 30–39 (TTTTSSGSSG) and 78–95 (STLS…STAA). Over residues 178-200 (TDHEDPSLTFRVDKELEQSESKK) the composition is skewed to basic and acidic residues. Positions 230 to 239 (PQTSANLSTK) are enriched in polar residues. Composition is skewed to basic and acidic residues over residues 260–302 (KPSD…RENS) and 310–386 (VQDH…KNEK). Residues 267–429 (KEWLQKKERE…QLEESEKMTR (163 aa)) are a coiled coil. Residues 502–512 (PGTTTSLRPFR) show a composition bias toward polar residues.

Expressed in amphid and phasmid ciliated neurons.

It is found in the cell projection. The protein localises to the cilium. The protein resides in the cytoplasm. It localises to the cytoskeleton. Its subcellular location is the cilium axoneme. The chain is Protein maph-9 from Caenorhabditis elegans.